Here is a 311-residue protein sequence, read N- to C-terminus: MYPAPDMSLWQGRIDSQEGADARRWHQWMRPYADDAEAASVLLGFASDEGVRRNQGRQGARHGPPALRRALANLAWHGEQAIYDAGDIVAGDDLEAAQECYAQRVADLLACGHRVVGLGGGHEIAYASFAGLARHLSRHERLPRIGILNFDAHFDLRHAERASSGTPFRQIAELCQASDWPFAYCCLGISRLSNTAALFDQAQRLGVRYLLDRQLQPWNLERSEAFLDGFLQSVDHLYLTVCLDVLPAAQAPGVSAPSAHGVEMPVVEHLVRRAKASGKLRLADIAELNPQLDSDQRTARIAARLVDSLVN.

Mn(2+) is bound by residues His-122, Asp-151, His-153, Asp-155, Cys-242, and Asp-244.

The protein belongs to the arginase family. As to quaternary structure, homodimer. Requires Mn(2+) as cofactor.

It catalyses the reaction N-formimidoyl-L-glutamate + H2O = formamide + L-glutamate. Its pathway is amino-acid degradation; L-histidine degradation into L-glutamate; L-glutamate from N-formimidoyl-L-glutamate (hydrolase route): step 1/1. Its function is as follows. Catalyzes the conversion of N-formimidoyl-L-glutamate to L-glutamate and formamide. The polypeptide is Formimidoylglutamase (Pseudomonas aeruginosa (strain ATCC 15692 / DSM 22644 / CIP 104116 / JCM 14847 / LMG 12228 / 1C / PRS 101 / PAO1)).